We begin with the raw amino-acid sequence, 80 residues long: Acyl carrier protein (80 aa).

In terms of domain architecture, Carrier spans 4–79 (DEVKGQVYDI…DAINYIVEKK (76 aa)). S39 carries the post-translational modification O-(pantetheine 4'-phosphoryl)serine.

Belongs to the acyl carrier protein (ACP) family. In terms of processing, 4'-phosphopantetheine is transferred from CoA to a specific serine of apo-ACP by AcpS. This modification is essential for activity because fatty acids are bound in thioester linkage to the sulfhydryl of the prosthetic group.

The protein resides in the cytoplasm. It functions in the pathway lipid metabolism; fatty acid biosynthesis. Carrier of the growing fatty acid chain in fatty acid biosynthesis. This Chloroherpeton thalassium (strain ATCC 35110 / GB-78) protein is Acyl carrier protein.